A 490-amino-acid chain; its full sequence is MCGSSMASEKQVKFVIVGGGIAGVTCAEQIASQFPSDEVCLLTASPLVKKVTNFRQVSKTLEEFDIEEQPSRVLEEKYPNLKVLQSAVRLLKAREHLLETEDGQRFFYRKLCLCSGGRPKLLSKDNPHVLGIRDTDSAQEFQKRLSTAKRIVVIGNGGIALELVYEVEGCEVIWAVKDKAIGNTFFDAGAAQFLIPSLEADRREASSVCKRARYTTDSSAAGHSGSSSELGSALGPDWHEGIELRGAKQSVRGVHIEYECEVEQIYTQQELLQSEHGTKTAELGVWPAYVQLTNGKIYGCDFIVSATGVVPNTDPFLPGNNFDVAADLGLLVDDHMRTSEADVFAAGDVCSAGWEPSSIWQQMRLWTQARQMGWYAARCMAADVLDEPIELDFCFELFSHITKFFNYKVVLLGKFNAQGLGQDHELLVRCTKGQEYVKVVLSGGRMVGAVLIGETDLEETFENLILNQMDLTRYGEELLNPNIDIEDYFD.

Belongs to the class-I pyridine nucleotide-disulfide oxidoreductase family. PYROXD1 subfamily. FAD serves as cofactor.

Its subcellular location is the nucleus. The protein resides in the cytoplasm. It localises to the myofibril. It is found in the sarcomere. Probable FAD-dependent oxidoreductase; involved in the cellular oxidative stress response. Required for normal sarcomere structure and muscle fiber integrity. In Danio rerio (Zebrafish), this protein is Pyridine nucleotide-disulfide oxidoreductase domain-containing protein 1 (pyroxd1).